A 622-amino-acid polypeptide reads, in one-letter code: 1-deoxy-D-xylulose-5-phosphate synthase (622 aa).

Thiamine diphosphate contacts are provided by residues His74 and 115–117; that span reads GHS. Mg(2+) is bound at residue Asp146. Thiamine diphosphate is bound by residues 147 to 148, Asn177, Phe285, and Glu366; that span reads GA. Asn177 serves as a coordination point for Mg(2+).

This sequence belongs to the transketolase family. DXPS subfamily. Homodimer. Requires Mg(2+) as cofactor. Thiamine diphosphate is required as a cofactor.

It catalyses the reaction D-glyceraldehyde 3-phosphate + pyruvate + H(+) = 1-deoxy-D-xylulose 5-phosphate + CO2. Its pathway is metabolic intermediate biosynthesis; 1-deoxy-D-xylulose 5-phosphate biosynthesis; 1-deoxy-D-xylulose 5-phosphate from D-glyceraldehyde 3-phosphate and pyruvate: step 1/1. Functionally, catalyzes the acyloin condensation reaction between C atoms 2 and 3 of pyruvate and glyceraldehyde 3-phosphate to yield 1-deoxy-D-xylulose-5-phosphate (DXP). In Magnetococcus marinus (strain ATCC BAA-1437 / JCM 17883 / MC-1), this protein is 1-deoxy-D-xylulose-5-phosphate synthase.